An 846-amino-acid polypeptide reads, in one-letter code: Leucine--tRNA ligase (846 aa).

The short motif at 42 to 52 (PYPSGNLHMGH) is the 'HIGH' region element. The short motif at 586–590 (KMSKS) is the 'KMSKS' region element. Lys589 lines the ATP pocket.

It belongs to the class-I aminoacyl-tRNA synthetase family.

It localises to the cytoplasm. It catalyses the reaction tRNA(Leu) + L-leucine + ATP = L-leucyl-tRNA(Leu) + AMP + diphosphate. The polypeptide is Leucine--tRNA ligase (Heliobacterium modesticaldum (strain ATCC 51547 / Ice1)).